Reading from the N-terminus, the 355-residue chain is 5-formaminoimidazole-4-carboxamide-1-(beta)-D-ribofuranosyl 5'-monophosphate synthetase (355 aa).

Residues H27 and S94 each coordinate 5-amino-1-(5-phospho-beta-D-ribosyl)imidazole-4-carboxamide. The region spanning 101-332 (TESFAELAVP…YSDMIEENLS (232 aa)) is the ATP-grasp domain. ATP-binding positions include 144 to 195 (PEKI…TRYY) and E225. Residue N254 coordinates 5-amino-1-(5-phospho-beta-D-ribosyl)imidazole-4-carboxamide. Mg(2+)-binding residues include E292 and E305.

It belongs to the phosphohexose mutase family. Mg(2+) is required as a cofactor. It depends on Mn(2+) as a cofactor.

The enzyme catalyses 5-amino-1-(5-phospho-beta-D-ribosyl)imidazole-4-carboxamide + formate + ATP = 5-formamido-1-(5-phospho-D-ribosyl)imidazole-4-carboxamide + ADP + phosphate. It functions in the pathway purine metabolism; IMP biosynthesis via de novo pathway; 5-formamido-1-(5-phospho-D-ribosyl)imidazole-4-carboxamide from 5-amino-1-(5-phospho-D-ribosyl)imidazole-4-carboxamide (formate route): step 1/1. Catalyzes the ATP- and formate-dependent formylation of 5-aminoimidazole-4-carboxamide-1-beta-d-ribofuranosyl 5'-monophosphate (AICAR) to 5-formaminoimidazole-4-carboxamide-1-beta-d-ribofuranosyl 5'-monophosphate (FAICAR) in the absence of folates. The polypeptide is 5-formaminoimidazole-4-carboxamide-1-(beta)-D-ribofuranosyl 5'-monophosphate synthetase (Methanococcoides burtonii (strain DSM 6242 / NBRC 107633 / OCM 468 / ACE-M)).